Consider the following 212-residue polypeptide: Large ribosomal subunit protein uL3 (212 aa).

Residues 127–161 (NFKRGPMAHGSKNHRLPGSTGAGTTPGRVFPGKRM) are disordered.

Belongs to the universal ribosomal protein uL3 family. Part of the 50S ribosomal subunit. Forms a cluster with proteins L14 and L19.

Its function is as follows. One of the primary rRNA binding proteins, it binds directly near the 3'-end of the 23S rRNA, where it nucleates assembly of the 50S subunit. This chain is Large ribosomal subunit protein uL3, found in Thermosynechococcus vestitus (strain NIES-2133 / IAM M-273 / BP-1).